Consider the following 112-residue polypeptide: Ciliary microtubule inner protein 3 (112 aa).

Positions 1 to 34 (MCKDSQKPSVPSHGPKTPSCKGVKAPHSSRPRAW) are disordered.

Belongs to the CIMIP3-like family.

The protein localises to the cytoplasm. Its subcellular location is the cytoskeleton. The protein resides in the flagellum axoneme. The chain is Ciliary microtubule inner protein 3 from Homo sapiens (Human).